A 96-amino-acid polypeptide reads, in one-letter code: Co-chaperonin GroES (96 aa).

It belongs to the GroES chaperonin family. As to quaternary structure, heptamer of 7 subunits arranged in a ring. Interacts with the chaperonin GroEL.

The protein resides in the cytoplasm. Together with the chaperonin GroEL, plays an essential role in assisting protein folding. The GroEL-GroES system forms a nano-cage that allows encapsulation of the non-native substrate proteins and provides a physical environment optimized to promote and accelerate protein folding. GroES binds to the apical surface of the GroEL ring, thereby capping the opening of the GroEL channel. This Haemophilus influenzae (strain ATCC 51907 / DSM 11121 / KW20 / Rd) protein is Co-chaperonin GroES.